The chain runs to 203 residues: Putative zinc finger protein 876 (203 aa).

C2H2-type zinc fingers lie at residues 63–85 (YTCE…KNIH), 91–113 (YKCE…KRIH), 119–141 (YKCE…KKIH), and 147–169 (YKCK…TNIH). The C2H2-type 5; degenerate zinc finger occupies 175-197 (YTCEECGKDFTWSSTLTVHQRIQ).

It belongs to the krueppel C2H2-type zinc-finger protein family.

It is found in the nucleus. May be involved in transcriptional regulation. This is Putative zinc finger protein 876 (ZNF876P) from Homo sapiens (Human).